The following is a 792-amino-acid chain: Phenylalanine--tRNA ligase beta subunit (792 aa).

The region spanning 39–147 (GEALDLILVA…EDAPIGTPLA (109 aa)) is the tRNA-binding domain. The 76-residue stretch at 400-475 (PAPASILLRR…RIRGYEHLPT (76 aa)) folds into the B5 domain. Residues Asp-453, Asp-459, Glu-462, and Glu-463 each coordinate Mg(2+). The FDX-ACB domain occupies 698–791 (SRFPFVRRDL…IQQRHDVRIR (94 aa)).

It belongs to the phenylalanyl-tRNA synthetase beta subunit family. Type 1 subfamily. As to quaternary structure, tetramer of two alpha and two beta subunits. It depends on Mg(2+) as a cofactor.

Its subcellular location is the cytoplasm. The enzyme catalyses tRNA(Phe) + L-phenylalanine + ATP = L-phenylalanyl-tRNA(Phe) + AMP + diphosphate + H(+). The polypeptide is Phenylalanine--tRNA ligase beta subunit (Xylella fastidiosa (strain Temecula1 / ATCC 700964)).